The chain runs to 226 residues: Cytidylate kinase (226 aa).

12 to 20 (GPSGAGKGT) lines the ATP pocket.

It belongs to the cytidylate kinase family. Type 1 subfamily.

Its subcellular location is the cytoplasm. It catalyses the reaction CMP + ATP = CDP + ADP. The catalysed reaction is dCMP + ATP = dCDP + ADP. This chain is Cytidylate kinase, found in Vibrio vulnificus (strain CMCP6).